The sequence spans 212 residues: ATP phosphoribosyltransferase (212 aa).

It belongs to the ATP phosphoribosyltransferase family. Short subfamily. Heteromultimer composed of HisG and HisZ subunits.

It localises to the cytoplasm. The enzyme catalyses 1-(5-phospho-beta-D-ribosyl)-ATP + diphosphate = 5-phospho-alpha-D-ribose 1-diphosphate + ATP. The protein operates within amino-acid biosynthesis; L-histidine biosynthesis; L-histidine from 5-phospho-alpha-D-ribose 1-diphosphate: step 1/9. Catalyzes the condensation of ATP and 5-phosphoribose 1-diphosphate to form N'-(5'-phosphoribosyl)-ATP (PR-ATP). Has a crucial role in the pathway because the rate of histidine biosynthesis seems to be controlled primarily by regulation of HisG enzymatic activity. The sequence is that of ATP phosphoribosyltransferase from Albidiferax ferrireducens (strain ATCC BAA-621 / DSM 15236 / T118) (Rhodoferax ferrireducens).